The sequence spans 209 residues: Large ribosomal subunit protein uL3 (209 aa).

The protein belongs to the universal ribosomal protein uL3 family. In terms of assembly, part of the 50S ribosomal subunit. Forms a cluster with proteins L14 and L19.

In terms of biological role, one of the primary rRNA binding proteins, it binds directly near the 3'-end of the 23S rRNA, where it nucleates assembly of the 50S subunit. This is Large ribosomal subunit protein uL3 from Brevibacillus brevis (strain 47 / JCM 6285 / NBRC 100599).